The following is a 278-amino-acid chain: Large ribosomal subunit protein uL2 (278 aa).

The tract at residues 223-278 is disordered; it reads RGSAMNPNDHPHGGGEGKAPVGRKAPMTPWGKKALGVKTRNKKKASTKLIVRRRTK. The segment covering 261–278 has biased composition (basic residues); that stretch reads TRNKKKASTKLIVRRRTK.

It belongs to the universal ribosomal protein uL2 family. In terms of assembly, part of the 50S ribosomal subunit. Forms a bridge to the 30S subunit in the 70S ribosome.

One of the primary rRNA binding proteins. Required for association of the 30S and 50S subunits to form the 70S ribosome, for tRNA binding and peptide bond formation. It has been suggested to have peptidyltransferase activity; this is somewhat controversial. Makes several contacts with the 16S rRNA in the 70S ribosome. This is Large ribosomal subunit protein uL2 from Spiroplasma kunkelii.